We begin with the raw amino-acid sequence, 374 residues long: Transaldolase (374 aa).

The active-site Schiff-base intermediate with substrate is the Lys-140.

Belongs to the transaldolase family. Type 2 subfamily.

The protein resides in the cytoplasm. The catalysed reaction is D-sedoheptulose 7-phosphate + D-glyceraldehyde 3-phosphate = D-erythrose 4-phosphate + beta-D-fructose 6-phosphate. The protein operates within carbohydrate degradation; pentose phosphate pathway; D-glyceraldehyde 3-phosphate and beta-D-fructose 6-phosphate from D-ribose 5-phosphate and D-xylulose 5-phosphate (non-oxidative stage): step 2/3. In terms of biological role, transaldolase is important for the balance of metabolites in the pentose-phosphate pathway. The protein is Transaldolase of Renibacterium salmoninarum (strain ATCC 33209 / DSM 20767 / JCM 11484 / NBRC 15589 / NCIMB 2235).